The following is a 354-amino-acid chain: Nicotinate-nucleotide--dimethylbenzimidazole phosphoribosyltransferase (354 aa).

The Proton acceptor role is filled by Glu-319.

Belongs to the CobT family.

It catalyses the reaction 5,6-dimethylbenzimidazole + nicotinate beta-D-ribonucleotide = alpha-ribazole 5'-phosphate + nicotinate + H(+). The protein operates within nucleoside biosynthesis; alpha-ribazole biosynthesis; alpha-ribazole from 5,6-dimethylbenzimidazole: step 1/2. Functionally, catalyzes the synthesis of alpha-ribazole-5'-phosphate from nicotinate mononucleotide (NAMN) and 5,6-dimethylbenzimidazole (DMB). In Pelodictyon phaeoclathratiforme (strain DSM 5477 / BU-1), this protein is Nicotinate-nucleotide--dimethylbenzimidazole phosphoribosyltransferase.